Consider the following 59-residue polypeptide: Large ribosomal subunit protein uL30 (59 aa).

This sequence belongs to the universal ribosomal protein uL30 family. As to quaternary structure, part of the 50S ribosomal subunit.

The polypeptide is Large ribosomal subunit protein uL30 (Clostridium kluyveri (strain ATCC 8527 / DSM 555 / NBRC 12016 / NCIMB 10680 / K1)).